The sequence spans 200 residues: ATP synthase subunit b 1 (200 aa).

Residues A14–A34 traverse the membrane as a helical segment.

Belongs to the ATPase B chain family. As to quaternary structure, F-type ATPases have 2 components, F(1) - the catalytic core - and F(0) - the membrane proton channel. F(1) has five subunits: alpha(3), beta(3), gamma(1), delta(1), epsilon(1). F(0) has three main subunits: a(1), b(2) and c(10-14). The alpha and beta chains form an alternating ring which encloses part of the gamma chain. F(1) is attached to F(0) by a central stalk formed by the gamma and epsilon chains, while a peripheral stalk is formed by the delta and b chains.

It localises to the cell inner membrane. Functionally, f(1)F(0) ATP synthase produces ATP from ADP in the presence of a proton or sodium gradient. F-type ATPases consist of two structural domains, F(1) containing the extramembraneous catalytic core and F(0) containing the membrane proton channel, linked together by a central stalk and a peripheral stalk. During catalysis, ATP synthesis in the catalytic domain of F(1) is coupled via a rotary mechanism of the central stalk subunits to proton translocation. In terms of biological role, component of the F(0) channel, it forms part of the peripheral stalk, linking F(1) to F(0). The polypeptide is ATP synthase subunit b 1 (Desulfosudis oleivorans (strain DSM 6200 / JCM 39069 / Hxd3) (Desulfococcus oleovorans)).